The following is a 463-amino-acid chain: Glutamate--tRNA ligase 1 (463 aa).

Residues Pro-10 to Ser-20 carry the 'HIGH' region motif. Residues Lys-239–Arg-243 carry the 'KMSKS' region motif. Lys-242 serves as a coordination point for ATP.

This sequence belongs to the class-I aminoacyl-tRNA synthetase family. Glutamate--tRNA ligase type 1 subfamily. Monomer.

The protein resides in the cytoplasm. It catalyses the reaction tRNA(Glu) + L-glutamate + ATP = L-glutamyl-tRNA(Glu) + AMP + diphosphate. In terms of biological role, catalyzes the attachment of glutamate to tRNA(Glu) in a two-step reaction: glutamate is first activated by ATP to form Glu-AMP and then transferred to the acceptor end of tRNA(Glu). This is Glutamate--tRNA ligase 1 from Rickettsia canadensis (strain McKiel).